Consider the following 354-residue polypeptide: tRNA N6-adenosine threonylcarbamoyltransferase (354 aa).

The Fe cation site is built by His111 and His115. Substrate contacts are provided by residues 134–138, Asp167, Gly180, and Asn279; that span reads LVSGG. Asp319 lines the Fe cation pocket.

It belongs to the KAE1 / TsaD family. Requires Fe(2+) as cofactor.

It is found in the cytoplasm. The enzyme catalyses L-threonylcarbamoyladenylate + adenosine(37) in tRNA = N(6)-L-threonylcarbamoyladenosine(37) in tRNA + AMP + H(+). Functionally, required for the formation of a threonylcarbamoyl group on adenosine at position 37 (t(6)A37) in tRNAs that read codons beginning with adenine. Is involved in the transfer of the threonylcarbamoyl moiety of threonylcarbamoyl-AMP (TC-AMP) to the N6 group of A37, together with TsaE and TsaB. TsaD likely plays a direct catalytic role in this reaction. In Neisseria gonorrhoeae (strain ATCC 700825 / FA 1090), this protein is tRNA N6-adenosine threonylcarbamoyltransferase.